The following is a 668-amino-acid chain: DNA ligase (668 aa).

Residues 37–41 (DNVYD), 86–87 (SM), and E116 contribute to the NAD(+) site. K118 (N6-AMP-lysine intermediate) is an active-site residue. 4 residues coordinate NAD(+): R139, E173, K288, and K312. Zn(2+) is bound by residues C406, C409, C424, and C429. The BRCT domain occupies 591–668 (IPDNPFKDKT…TEEEAIAQIK (78 aa)).

Belongs to the NAD-dependent DNA ligase family. LigA subfamily. Mg(2+) serves as cofactor. Mn(2+) is required as a cofactor.

It carries out the reaction NAD(+) + (deoxyribonucleotide)n-3'-hydroxyl + 5'-phospho-(deoxyribonucleotide)m = (deoxyribonucleotide)n+m + AMP + beta-nicotinamide D-nucleotide.. In terms of biological role, DNA ligase that catalyzes the formation of phosphodiester linkages between 5'-phosphoryl and 3'-hydroxyl groups in double-stranded DNA using NAD as a coenzyme and as the energy source for the reaction. It is essential for DNA replication and repair of damaged DNA. The chain is DNA ligase from Lactobacillus acidophilus (strain ATCC 700396 / NCK56 / N2 / NCFM).